Here is a 218-residue protein sequence, read N- to C-terminus: MKVIIPVSPINSLKTRLSEFLSSEERKNLLLNMLRDIKKALEGLDVVVVSRDDEILDFAKYELKAEIVKEKYKGLNNAIKQAFDEIDDEEVIIIPADIPLIKKKHIEDILKLSKDYDLIIASSRGGGTNLLYLKSKNLIELRYEGFSFLKHLEEAEKRNLRYYIYDSFLISVDINTPEDLGEIFIHGDNTYTKNYLKGLGIEVEPKHSSAGRFVVKRR.

This sequence belongs to the CofC family. Homodimer.

The catalysed reaction is (2S)-2-phospholactate + GTP + H(+) = (2S)-lactyl-2-diphospho-5'-guanosine + diphosphate. It participates in cofactor biosynthesis; coenzyme F420 biosynthesis. Functionally, guanylyltransferase that catalyzes the activation of (2S)-2-phospholactate (2-PL) as (2S)-lactyl-2-diphospho-5'-guanosine, via the condensation of 2-PL with GTP. It is involved in the biosynthesis of coenzyme F420, a hydride carrier cofactor. This chain is 2-phospho-L-lactate guanylyltransferase, found in Methanocaldococcus fervens (strain DSM 4213 / JCM 15782 / AG86) (Methanococcus fervens).